Reading from the N-terminus, the 199-residue chain is Large ribosomal subunit protein uL5 (199 aa).

This sequence belongs to the universal ribosomal protein uL5 family. In terms of assembly, part of the 50S ribosomal subunit; part of the 5S rRNA/L5/L18/L25 subcomplex. Contacts the 5S rRNA and the P site tRNA. Forms a bridge to the 30S subunit in the 70S ribosome.

This is one of the proteins that bind and probably mediate the attachment of the 5S RNA into the large ribosomal subunit, where it forms part of the central protuberance. In the 70S ribosome it contacts protein S13 of the 30S subunit (bridge B1b), connecting the 2 subunits; this bridge is implicated in subunit movement. Contacts the P site tRNA; the 5S rRNA and some of its associated proteins might help stabilize positioning of ribosome-bound tRNAs. The polypeptide is Large ribosomal subunit protein uL5 (Frankia casuarinae (strain DSM 45818 / CECT 9043 / HFP020203 / CcI3)).